The primary structure comprises 279 residues: NADPH-dependent 7-cyano-7-deazaguanine reductase (279 aa).

86–88 (IES) serves as a coordination point for substrate. 88-89 (SK) is a binding site for NADPH. The Thioimide intermediate role is filled by cysteine 187. The Proton donor role is filled by aspartate 194. 226–227 (HE) serves as a coordination point for substrate. 255-256 (RG) provides a ligand contact to NADPH.

This sequence belongs to the GTP cyclohydrolase I family. QueF type 2 subfamily. In terms of assembly, homodimer.

It is found in the cytoplasm. The enzyme catalyses 7-aminomethyl-7-carbaguanine + 2 NADP(+) = 7-cyano-7-deazaguanine + 2 NADPH + 3 H(+). Its pathway is tRNA modification; tRNA-queuosine biosynthesis. Its function is as follows. Catalyzes the NADPH-dependent reduction of 7-cyano-7-deazaguanine (preQ0) to 7-aminomethyl-7-deazaguanine (preQ1). The sequence is that of NADPH-dependent 7-cyano-7-deazaguanine reductase from Pasteurella multocida (strain Pm70).